The following is a 44-amino-acid chain: Unknown protein 1 (44 aa).

The protein is Unknown protein 1 of Lonomia obliqua (Moth).